The primary structure comprises 115 residues: MDKRDLYDSFGEMEQQMQQMLDKMAKLRADMTTVLEKNAELVIENEHLREHMVEIENELPKKAASTTTLSKSRQNLEKLYDEGFHVCNQFYGKRRDDDESCVFCLEVIYGERERA.

Zn(2+) is bound by residues H85, C87, C101, and C104.

This sequence belongs to the YabA family. In terms of assembly, homotetramer. Interacts with both DnaA and DnaN, acting as a bridge between these two proteins. Requires Zn(2+) as cofactor.

It localises to the cytoplasm. It is found in the nucleoid. In terms of biological role, involved in control of chromosome replication initiation. Inhibits the cooperative binding of DnaA to the oriC region, thus negatively regulating initiation of chromosome replication. Inhibits the ability of DnaA-ATP to form a helix on DNA; does not disassemble preformed DnaA-DNA helices. Decreases the residence time of DnaA on the chromosome at its binding sites (oriC, replication forks and promoter-binding sites). Tethers DnaA to the replication machinery via the DNA polymerase beta sliding clamp subunit (dnaN). Associates with oriC and other DnaA targets on the chromosome in a DnaA-dependent manner. This Lactiplantibacillus plantarum (strain ATCC BAA-793 / NCIMB 8826 / WCFS1) (Lactobacillus plantarum) protein is Replication initiation control protein YabA.